Consider the following 158-residue polypeptide: MFAVIKTGGKQYRVVANQVVRVEKIIGNAGDVVEFNDILMAGQEDNAIIGAPVVRDALVTAEIIEQARARKVIAFKKRRRQNSKRTRGHRQEVTTLRILEILTGGLKPKKAVAKSIKEEAAVLKATTQETKSAASVKKAAKKSAPQKQAAVASNSKED.

The tract at residues 127-158 is disordered; the sequence is TQETKSAASVKKAAKKSAPQKQAAVASNSKED. The segment covering 131 to 158 has biased composition (low complexity); sequence KSAASVKKAAKKSAPQKQAAVASNSKED.

It belongs to the bacterial ribosomal protein bL21 family. As to quaternary structure, part of the 50S ribosomal subunit. Contacts protein L20.

In terms of biological role, this protein binds to 23S rRNA in the presence of protein L20. This chain is Large ribosomal subunit protein bL21, found in Bartonella henselae (strain ATCC 49882 / DSM 28221 / CCUG 30454 / Houston 1) (Rochalimaea henselae).